Reading from the N-terminus, the 319-residue chain is Cytochrome f (319 aa).

Residues 1 to 35 form the signal peptide; it reads MQNRNISYWIKKCVIQSISIVILMKIIAWPSISEA. The heme site is built by tyrosine 36, cysteine 56, cysteine 59, and histidine 60. The helical transmembrane segment at 285-305 threads the bilayer; sequence VQSLLVFFVSVTLAQIFLVLK.

The protein belongs to the cytochrome f family. As to quaternary structure, the 4 large subunits of the cytochrome b6-f complex are cytochrome b6, subunit IV (17 kDa polypeptide, petD), cytochrome f and the Rieske protein, while the 4 small subunits are PetG, PetL, PetM and PetN. The complex functions as a dimer. Heme is required as a cofactor.

It is found in the plastid. The protein resides in the chloroplast thylakoid membrane. Component of the cytochrome b6-f complex, which mediates electron transfer between photosystem II (PSII) and photosystem I (PSI), cyclic electron flow around PSI, and state transitions. The protein is Cytochrome f of Physcomitrium patens (Spreading-leaved earth moss).